Here is a 1077-residue protein sequence, read N- to C-terminus: Deoxyribonuclease CdiA (1077 aa).

Positions 67–384 (IGTSRQKTTD…DRDNYDAKQS (318 aa)) are FHA-2. Positions 531–546 (QQNVDDLSRDTGNANG) are enriched in polar residues. Residues 531–555 (QQNVDDLSRDTGNANGSIGPIFDKE) form a disordered region. Positions 781 to 784 (VENN) match the VENN CT cleavage motif motif. Positions 954-1077 (MPWEDYVGKT…GVKVTVTQVK (124 aa)) are DNase activity.

Interacts with cognate immunity protein CdiI-YPIII, which blocks its toxic DNase activity. The cofactor is Zn(2+).

It is found in the target cell. The protein resides in the target cell cytoplasm. Toxic component of a toxin-immunity protein module, which functions as a cellular contact-dependent growth inhibition (CDI) system. CDI modules allow bacteria to communicate with and inhibit the growth of closely related neighboring bacteria in a contact-dependent fashion. The C-terminal 123 residues (954-1077) has DNase activity in the presence of Zn(2+), converting supercoiled DNA into open-circular form. Toxic activity is neutralized by coexpression of the cognate immunity protein CdiI-YPIII, but not by non-cognate immunity proteins from other toxin-immunity modules. Expression of the DNase domain as a chimera allows bacteria to attack other non-immune bacteria which become filamentous and have lost DNA staining. Functionally, the CdiA protein is thought to be exported from the cell through the central lumen of CdiB, the other half of its two-partner system (TPS). The TPS domain probably remains associated with CdiB while the FHA-1 domain forms an extended filament with the receptor-binding domain (RBD) at its extremity; in the secretion arrested state the C-terminus of the RBD and YP domains form a hairpin-like structure as the FHA-2, PT and CT domains are periplasmic. The YP domain is probably responsible for this arrest at the point where it re-enters the host cell periplasm. Upon binding to a target cell outer membrane receptor a signal is transmitted to activate secretion. The filament elongates slightly, the rest of CdiA is secreted and the FHA-2 domain becomes stably associated with the target cell's outer membrane where it facilitates entry of the toxic CT domain into the target cell periplasm. From there the toxic CT domain is cleaved and gains access to the target cell cytoplasm via an inner membrane protein. The chain is Deoxyribonuclease CdiA from Yersinia pseudotuberculosis serotype O:3 (strain YPIII).